A 378-amino-acid polypeptide reads, in one-letter code: MVWGKICWFSQRAGWTVFAESQISLSCSLCLHSGDQEAQNPNLVSQLCGVFLQNETNETIHMQMSMAVGQQALPLNIIAPKAVLVSLCGVLLNGTVFWLLCCGATNPYMVYILHLVAADVIYLCCSAVGFLQVTLLTYHGVVFFIPDFLAILSPFSFEVCLCLLVAISTERCVCVLFPIWYRCHRPKYTSNVVCTLIWGLPFCINIVKSLFLTYWKHVKACVIFLKLSGLFHAILSLVMCVSSLTLLIRFLCCSQQQKATRVYAVVQISAPMFLLWALPLSVAPLITDFKMFVTTSYLISLFLIINSSANPIIYFFVGSLRKKRLKESLRVILQRALADKPEVGRNKKAAGIDPMEQPHSTQHVENLLPREHRVDVET.

The Extracellular portion of the chain corresponds to 1 to 77 (MVWGKICWFS…VGQQALPLNI (77 aa)). Residues asparagine 54 and asparagine 57 are each glycosylated (N-linked (GlcNAc...) asparagine). A helical membrane pass occupies residues 78–101 (IAPKAVLVSLCGVLLNGTVFWLLC). Over 102–109 (CGATNPYM) the chain is Cytoplasmic. The chain crosses the membrane as a helical span at residues 110–136 (VYILHLVAADVIYLCCSAVGFLQVTLL). The Extracellular portion of the chain corresponds to 137-154 (TYHGVVFFIPDFLAILSP). Residues 155-169 (FSFEVCLCLLVAIST) traverse the membrane as a helical segment. The Cytoplasmic segment spans residues 170–191 (ERCVCVLFPIWYRCHRPKYTSN). The chain crosses the membrane as a helical span at residues 192–207 (VVCTLIWGLPFCINIV). The Extracellular portion of the chain corresponds to 208-221 (KSLFLTYWKHVKAC). The chain crosses the membrane as a helical span at residues 222 to 248 (VIFLKLSGLFHAILSLVMCVSSLTLLI). At 249–264 (RFLCCSQQQKATRVYA) the chain is on the cytoplasmic side. A helical transmembrane segment spans residues 265–286 (VVQISAPMFLLWALPLSVAPLI). At 287-297 (TDFKMFVTTSY) the chain is on the extracellular side. A helical transmembrane segment spans residues 298–317 (LISLFLIINSSANPIIYFFV). The Cytoplasmic segment spans residues 318-378 (GSLRKKRLKE…PREHRVDVET (61 aa)). Positions 344-378 (GRNKKAAGIDPMEQPHSTQHVENLLPREHRVDVET) are disordered. Residues 368–378 (LPREHRVDVET) are compositionally biased toward basic and acidic residues.

The protein belongs to the G-protein coupled receptor 1 family. Mas subfamily.

It is found in the cell membrane. This chain is Mas-related G-protein coupled receptor MRG (MAS1L), found in Homo sapiens (Human).